The chain runs to 298 residues: Ribosomal RNA small subunit methyltransferase A (298 aa).

Residues asparagine 30, valine 32, glycine 57, glutamate 78, aspartate 108, and asparagine 126 each contribute to the S-adenosyl-L-methionine site.

The protein belongs to the class I-like SAM-binding methyltransferase superfamily. rRNA adenine N(6)-methyltransferase family. RsmA subfamily.

It localises to the cytoplasm. It carries out the reaction adenosine(1518)/adenosine(1519) in 16S rRNA + 4 S-adenosyl-L-methionine = N(6)-dimethyladenosine(1518)/N(6)-dimethyladenosine(1519) in 16S rRNA + 4 S-adenosyl-L-homocysteine + 4 H(+). Its function is as follows. Specifically dimethylates two adjacent adenosines (A1518 and A1519) in the loop of a conserved hairpin near the 3'-end of 16S rRNA in the 30S particle. May play a critical role in biogenesis of 30S subunits. This Cutibacterium acnes (strain DSM 16379 / KPA171202) (Propionibacterium acnes) protein is Ribosomal RNA small subunit methyltransferase A.